The chain runs to 485 residues: Cobyric acid synthase (485 aa).

The GATase cobBQ-type domain maps to 248–435; it reads VLKVVVPVLP…LHGLFESPDA (188 aa). Catalysis depends on Cys329, which acts as the Nucleophile. The active site involves His427.

Belongs to the CobB/CobQ family. CobQ subfamily.

It participates in cofactor biosynthesis; adenosylcobalamin biosynthesis. Functionally, catalyzes amidations at positions B, D, E, and G on adenosylcobyrinic A,C-diamide. NH(2) groups are provided by glutamine, and one molecule of ATP is hydrogenolyzed for each amidation. The chain is Cobyric acid synthase from Stutzerimonas stutzeri (strain A1501) (Pseudomonas stutzeri).